Reading from the N-terminus, the 144-residue chain is Large-conductance mechanosensitive channel (144 aa).

The next 2 membrane-spanning stretches (helical) occupy residues Val21–Ile41 and Gly76–Ile96. Residues Gln105–Asp144 form a disordered region. Residues Cys118–Lys134 are compositionally biased toward basic and acidic residues.

It belongs to the MscL family. Homopentamer.

It localises to the cell inner membrane. In terms of biological role, channel that opens in response to stretch forces in the membrane lipid bilayer. May participate in the regulation of osmotic pressure changes within the cell. This is Large-conductance mechanosensitive channel from Sodalis glossinidius (strain morsitans).